An 86-amino-acid polypeptide reads, in one-letter code: Short neurotoxin homolog NTL1 (86 aa).

Positions 1 to 21 (MKTLLLSLVVLTIACLDLGYT) are cleaved as a signal peptide. Disulfide bonds link C24-C45, C38-C62, C66-C78, and C79-C84.

As to expression, expressed by the venom gland.

It localises to the secreted. This chain is Short neurotoxin homolog NTL1, found in Bungarus multicinctus (Many-banded krait).